The sequence spans 475 residues: Eukaryotic translation initiation factor 3 subunit L (475 aa).

The 195-residue stretch at 257–451 folds into the PCI domain; that stretch reads DAIRMFSHIL…DLDYAMQGDL (195 aa).

This sequence belongs to the eIF-3 subunit L family. As to quaternary structure, component of the eukaryotic translation initiation factor 3 (eIF-3) complex.

The protein localises to the cytoplasm. Its function is as follows. Component of the eukaryotic translation initiation factor 3 (eIF-3) complex, which is involved in protein synthesis of a specialized repertoire of mRNAs and, together with other initiation factors, stimulates binding of mRNA and methionyl-tRNAi to the 40S ribosome. The eIF-3 complex specifically targets and initiates translation of a subset of mRNAs involved in cell proliferation. This chain is Eukaryotic translation initiation factor 3 subunit L, found in Botryotinia fuckeliana (strain B05.10) (Noble rot fungus).